The following is a 523-amino-acid chain: Protein tweety homolog 3 (523 aa).

Residues 1-42 are Extracellular-facing; it reads MAGVSYAAPWWVSLLHRLPHFDLSWEATSSQFRPEDTDYQQA. Residues 43 to 63 form a helical membrane-spanning segment; the sequence is LLLLGAAALACLALDLLFLLF. Over 64-86 the chain is Cytoplasmic; the sequence is YSFWLCCRRRKSEEHLDADCCCT. A helical transmembrane segment spans residues 87-107; it reads AWCVIIATLVCSAGIAVGFYG. Residues 108–211 lie on the Extracellular side of the membrane; that stretch reads NGETSDGIHR…VDLYDWYRWL (104 aa). Positions 110 and 113 each coordinate Ca(2+). 2 N-linked (GlcNAc...) asparagine glycosylation sites follow: Asn-126 and Asn-144. A helical membrane pass occupies residues 212-232; that stretch reads GYLGLLLLDVIICLLVLVGLI. The Cytoplasmic portion of the chain corresponds to 233 to 236; the sequence is RSSK. The chain crosses the membrane as a helical span at residues 237-257; sequence GILVGVCLLGVLALVISWGAL. Topologically, residues 258–386 are extracellular; that stretch reads GLELAVSVGS…LTGFCYDGVE (129 aa). 2 disulfides stabilise this stretch: Cys-271-Cys-381 and Cys-299-Cys-366. Residue Asn-351 is glycosylated (N-linked (GlcNAc...) asparagine). A helical membrane pass occupies residues 387 to 407; it reads GLIYLALFSFVTALMFSSIVC. The Cytoplasmic portion of the chain corresponds to 408 to 523; the sequence is SVPHTWQQKR…QPRPDSSGSH (116 aa). 2 disordered regions span residues 413–435 and 482–523; these read WQQK…RQAH and QNPR…SGSH. The residue at position 496 (Ser-496) is a Phosphoserine. The PY-motif; mediates interaction with NEDD4L motif lies at 498–501; that stretch reads PPSY. The span at 501–523 shows a compositional bias: polar residues; the sequence is YTSSMRAKYLATSQPRPDSSGSH. Ser-504 and Ser-522 each carry phosphoserine.

This sequence belongs to the tweety family. In terms of assembly, homotetramer; disulfide-linked. Homodimer. Interacts with NEDD4L. Post-translationally, ubiquitinated by NEDD4L. In terms of processing, N-Glycosylated. Contains high-mannose, hybrid and complex oligosaccharides. As to expression, expressed in excitable tissues. Expressed in the brain, heart, skeletal muscle, colon, spleen, kidney and peripheral blood leukocytes.

Its subcellular location is the cell membrane. The enzyme catalyses chloride(in) = chloride(out). It catalyses the reaction L-glutamate(out) = L-glutamate(in). Functionally, calcium-independent, swelling-dependent volume-regulated anion channel (VRAC-swell) which plays a pivotal role in the process of regulatory volume decrease (RVD) in the brain through the efflux of anions like chloride and organic osmolytes like glutamate. Probable large-conductance Ca(2+)-activated chloride channel. The chain is Protein tweety homolog 3 (TTYH3) from Homo sapiens (Human).